The chain runs to 504 residues: WD repeat-containing protein 55 homolog (504 aa).

Positions 32 to 49 (QEVVNESDSEIGEYDLGD) are enriched in acidic residues. The tract at residues 32–135 (QEVVNESDSE…NAFDMDEDDE (104 aa)) is disordered. The span at 66–76 (DSISSDGSFNP) shows a compositional bias: polar residues. Residues 77–95 (NDEDSDTDSDDSMLDEPDE) show a composition bias toward acidic residues. Residues 114–124 (SGSSNRNQDSD) show a composition bias toward polar residues. WD repeat units follow at residues 158–197 (KLED…NKLL), 202–241 (VHAK…LKKL), 245–283 (AHDD…SIFE), 286–325 (EIED…LYVQ), 328–367 (PYEE…YHCD), and 412–451 (QHNM…DFGD). The interval 484 to 504 (AKEDNNDNENDDATAGPSNTT) is disordered.

The protein belongs to the WD repeat WDR55 family.

The chain is WD repeat-containing protein 55 homolog from Drosophila willistoni (Fruit fly).